The chain runs to 150 residues: Transcriptional repressor NrdR (150 aa).

Residues 3 to 34 (CPFCNFEESKVVDSRATDDNTTIRRRRECLNC) fold into a zinc finger. Positions 49–139 (VLVVKKDLTR…VYRQFKDINT (91 aa)) constitute an ATP-cone domain.

The protein belongs to the NrdR family. The cofactor is Zn(2+).

Negatively regulates transcription of bacterial ribonucleotide reductase nrd genes and operons by binding to NrdR-boxes. This chain is Transcriptional repressor NrdR, found in Clostridium botulinum (strain Alaska E43 / Type E3).